Reading from the N-terminus, the 292-residue chain is NAD-dependent protein deacetylase sir-2.4 (292 aa).

The Deacetylase sirtuin-type domain occupies 31-292 (IEKLRTLYNH…DEVPIPLKIS (262 aa)). NAD(+)-binding positions include 56–75 (GAGV…QGVW) and 116–119 (QNVD). Catalysis depends on His-136, which acts as the Proton acceptor. 4 residues coordinate Zn(2+): Cys-144, Cys-147, Cys-163, and Cys-169. Residues 216–218 (GTS), 242–244 (NYQ), and Val-260 each bind NAD(+).

Belongs to the sirtuin family. Class IV subfamily. Zn(2+) is required as a cofactor.

The catalysed reaction is N(6)-acetyl-L-lysyl-[protein] + NAD(+) + H2O = 2''-O-acetyl-ADP-D-ribose + nicotinamide + L-lysyl-[protein]. Its function is as follows. NAD-dependent protein deacetylase. The protein is NAD-dependent protein deacetylase sir-2.4 (sir-2.4) of Caenorhabditis elegans.